A 587-amino-acid polypeptide reads, in one-letter code: Aspartate--tRNA ligase (587 aa).

E174 lines the L-aspartate pocket. The tract at residues 198-201 is aspartate; that stretch reads QITK. Position 220 (R220) interacts with L-aspartate. ATP is bound by residues 220 to 222 and Q229; that span reads RDE. H443 lines the L-aspartate pocket. E477 is an ATP binding site. Residue R484 participates in L-aspartate binding. Residue 529-532 participates in ATP binding; sequence GLDR.

This sequence belongs to the class-II aminoacyl-tRNA synthetase family. Type 1 subfamily. In terms of assembly, homodimer.

The protein localises to the cytoplasm. The catalysed reaction is tRNA(Asp) + L-aspartate + ATP = L-aspartyl-tRNA(Asp) + AMP + diphosphate. Its function is as follows. Catalyzes the attachment of L-aspartate to tRNA(Asp) in a two-step reaction: L-aspartate is first activated by ATP to form Asp-AMP and then transferred to the acceptor end of tRNA(Asp). The protein is Aspartate--tRNA ligase of Streptococcus pneumoniae serotype 4 (strain ATCC BAA-334 / TIGR4).